A 245-amino-acid chain; its full sequence is 14-3-3 protein theta (245 aa).

This sequence belongs to the 14-3-3 family. Homodimer, and heterodimer with other family members.

It is found in the cytoplasm. Its function is as follows. Adapter protein implicated in the regulation of a large spectrum of both general and specialized signaling pathways. Binds to a large number of partners, usually by recognition of a phosphoserine or phosphothreonine motif. Binding generally results in the modulation of the activity of the binding partner. This is 14-3-3 protein theta (YWHAQ) from Gallus gallus (Chicken).